A 99-amino-acid polypeptide reads, in one-letter code: Acylphosphatase (99 aa).

The region spanning 5–97 (IRQVMISGRV…QPGERFSILS (93 aa)) is the Acylphosphatase-like domain. Residues R20 and N38 contribute to the active site.

This sequence belongs to the acylphosphatase family.

The enzyme catalyses an acyl phosphate + H2O = a carboxylate + phosphate + H(+). In Rhodopseudomonas palustris (strain ATCC BAA-98 / CGA009), this protein is Acylphosphatase (acyP).